A 100-amino-acid chain; its full sequence is Defensin-6 (100 aa).

An N-terminal signal peptide occupies residues 1–19 (MRTLTILTAVLLVALQAKA). A propeptide spanning residues 20 to 68 (EPLQAEDEPLQAKAYEADAQEQRGANDQDFAVSFAEDASSSLRALGSTR) is cleaved from the precursor. 3 disulfide bridges follow: cysteine 72/cysteine 99, cysteine 74/cysteine 88, and cysteine 78/cysteine 98.

It belongs to the alpha-defensin family. As to quaternary structure, homodimer. Self-assembles into higher-order oligomers termed nanonets, fibril-like structures that entrap microbes. Self-assembly into nanonets seems to protect against proteolytic digestion in duodenal fluid. Interacts with Y.enterocolitica invasin and S.typhimurium fliC/flagellim; the interaction creates an anchoring site for progressive DEFA6 self-assembly into nanonets. In terms of processing, proteolytically cleaved by trypsin at Arg-68; the propeptide is stored in the tissue of the small intestine and the mature peptide is found in the luminal fluid; cleavage may occur during or after release into the lumen. The N-terminal propeptide region suppresses self-assembly and renders DEFA6 propeptide unable to agglutinate bacteria and protect human epithelial cells from bacterial invasion. Under reducing conditions, naturally present in the gut owing to the low redox potential or enzymatically generated by the thioredoxin system, the disulfide bridges are opened leading to a conformational change of DEF6, thereby changing its antimicrobial spectrum. The reduced form exhibits inhibitory activity against anaerobic bacteria, in contrast to the minimal antimicrobial activity of the disulfide-linked oxidized form. The formation of higher-order nanonets and bacterial entrapment is independent of the redox state.

Its subcellular location is the secreted. It localises to the cytoplasmic vesicle. The protein resides in the secretory vesicle. Its function is as follows. Host-defense peptide that contributes to intestinal innate immunity and mediates homeostasis at mucosal surfaces by forming higher-order oligomers that capture bacteria and prevent microbial invasion of the epithelium. After binding to bacterial surface proteins, undergoes ordered self-assembly to form fibril-like nanonets that surround and entangle bacteria and thereby prevent bacterial invasion across the epithelial barrier. Entangles and agglutinates Gram-negative bacteria, such as E.coli, S.typhimurium and Y.enterocolitica, and Gram-positive bacteria such as L.monocytogenes, thereby protecting the intestine against invasion by enteric bacterial pathogens. Blocks adhesion of C.albicans to intestinal epithelial cells and thereby suppresses fungal invasion of epithelial cells and biofilm formation. Under reducing conditions and in an acidic environment similar to the intestinal milieu, exhibits inhibitory activity against anaerobic bacteria such as B.adolescentis, L.acidophilus, and B.breve, as well as B.longum and S.thermophilus, possibly by leading to alterations in bacterial cell envelope structures. The disulfide-linked oxidized form exhibits negligible antimicrobial activity against Gram-negative and Gram-positive bacteria, as compared to the enteric defensin DEFA5. The chain is Defensin-6 (DEFA6) from Pan troglodytes (Chimpanzee).